The chain runs to 338 residues: Heat-inducible transcription repressor HrcA (338 aa).

Belongs to the HrcA family.

Negative regulator of class I heat shock genes (grpE-dnaK-dnaJ and groELS operons). Prevents heat-shock induction of these operons. The protein is Heat-inducible transcription repressor HrcA of Nitrosomonas eutropha (strain DSM 101675 / C91 / Nm57).